Reading from the N-terminus, the 544-residue chain is Probable protein kinase UbiB (544 aa).

The Protein kinase domain occupies Glu-123–Leu-501. Residues Leu-129–Val-137 and Lys-152 contribute to the ATP site. Asp-287 (proton acceptor) is an active-site residue. The next 2 helical transmembrane spans lie at Ala-496–Val-516 and Ala-519–Trp-539.

The protein belongs to the ABC1 family. UbiB subfamily.

Its subcellular location is the cell inner membrane. It functions in the pathway cofactor biosynthesis; ubiquinone biosynthesis [regulation]. In terms of biological role, is probably a protein kinase regulator of UbiI activity which is involved in aerobic coenzyme Q (ubiquinone) biosynthesis. The polypeptide is Probable protein kinase UbiB (Vibrio campbellii (strain ATCC BAA-1116)).